A 462-amino-acid polypeptide reads, in one-letter code: MLGLTQHAQKVWRMKPFSPEVSPGSSPATAGHLLRISTLFLTLLELAQVCRGSVVSNRPFITVWNGDTHWCLTEYGVDVDVSVFDVVANKEQSFQGSNMTIFYREELGTYPYYTPTGEPVFGGLPQNASLVTHLAHTFQDIKAAMPEPDFSGLAVIDWEAWRPRWAFNWDSKDIYRQRSMELVQAEHPDWPETLVEAAAKNQFQEAAEAWMAGTLQLGQVLRPRGLWGYYGFPDCYNNDFLSLNYTGQCPVFVRDQNDQLGWLWNQSYALYPSIYLPAALMGTEKSQMYVRHRVQEALRVAIVSRDPHVPVMPYVQIFYEMTDYLLPLEELEHSLGESAAQGVAGAVLWLSSDKTSTKESCQAIKAYMDSTLGPFIVNVTSAALLCSEALCSGHGRCVRHPSYPEALLTLNPASFSIELTHDGRPPSLKGTLSLKDRAQMAMKFRCRCYRGWRGKWCDKRGM.

Residues 1–52 form the signal peptide; it reads MLGLTQHAQKVWRMKPFSPEVSPGSSPATAGHLLRISTLFLTLLELAQVCRG. Cystine bridges form between Cys-71–Cys-361 and Cys-235–Cys-249. Residues Asn-98 and Asn-127 are each glycosylated (N-linked (GlcNAc...) asparagine). Glu-159 functions as the Proton donor in the catalytic mechanism. N-linked (GlcNAc...) asparagine glycosylation is found at Asn-244, Asn-265, and Asn-378. Disulfide bonds link Cys-386–Cys-397, Cys-391–Cys-446, and Cys-448–Cys-457. The 12-residue stretch at 446–457 folds into the EGF-like domain; sequence CRCYRGWRGKWC.

The protein belongs to the glycosyl hydrolase 56 family. As to expression, highly expressed in liver, kidney, lung and skin.

It is found in the secreted. Its subcellular location is the lysosome. It catalyses the reaction Random hydrolysis of (1-&gt;4)-linkages between N-acetyl-beta-D-glucosamine and D-glucuronate residues in hyaluronate.. In terms of biological role, may have a role in promoting tumor progression. May block the TGFB1-enhanced cell growth. This Mus musculus (Mouse) protein is Hyaluronidase-1 (Hyal1).